Here is a 259-residue protein sequence, read N- to C-terminus: Putative electron transfer flavoprotein subunit YgcR (259 aa).

Belongs to the ETF beta-subunit/FixA family. YgcQ and YgcR form a heterodimer.

Its function is as follows. May play a role in a redox process. The polypeptide is Putative electron transfer flavoprotein subunit YgcR (ygcR) (Escherichia coli (strain K12)).